A 373-amino-acid chain; its full sequence is NAD(P)H-quinone oxidoreductase subunit 1 (373 aa).

8 consecutive transmembrane segments (helical) span residues 28–48 (LLWL…GVLV), 98–118 (LLFT…WLII), 129–149 (VGVG…GLLM), 167–187 (AAQS…IVMM), 205–225 (ILSW…ICAL), 267–287 (VLSA…PIPV), 309–329 (SVGI…AILL), and 348–368 (FLLP…LAFP).

It belongs to the complex I subunit 1 family. As to quaternary structure, NDH-1 is composed of at least 11 different subunits.

It is found in the cellular thylakoid membrane. The catalysed reaction is a plastoquinone + NADH + (n+1) H(+)(in) = a plastoquinol + NAD(+) + n H(+)(out). It carries out the reaction a plastoquinone + NADPH + (n+1) H(+)(in) = a plastoquinol + NADP(+) + n H(+)(out). Its function is as follows. NDH-1 shuttles electrons from an unknown electron donor, via FMN and iron-sulfur (Fe-S) centers, to quinones in the respiratory and/or the photosynthetic chain. The immediate electron acceptor for the enzyme in this species is believed to be plastoquinone. Couples the redox reaction to proton translocation, and thus conserves the redox energy in a proton gradient. This Parasynechococcus marenigrum (strain WH8102) protein is NAD(P)H-quinone oxidoreductase subunit 1.